The sequence spans 353 residues: Trans-enoyl reductase RAP2 (353 aa).

46-49 contacts NADP(+); it reads CDHK. 131–138 is a substrate binding site; the sequence is TGLSTIGM. Residues 189-192, Y207, and 254-255 each bind NADP(+); these read SPRN and LE. 274–278 is a binding site for substrate; sequence GMALL. NADP(+) is bound at residue 343–344; that stretch reads VS.

The protein belongs to the zinc-containing alcohol dehydrogenase family. As to quaternary structure, monomer.

The protein operates within secondary metabolite biosynthesis. Functionally, trans-enoyl reductase; part of the gene cluster that mediates the biosynthesis of a tyrosine-derived cytochalasan acting as a fungal signal recognized by resistant rice plants and leads to avirulence in Pi33 resistant rice cultivars. The first step in the pathway is catalyzed by the hybrid PKS-NRPS ACE1, assisted by the enoyl reductase RAP1, that are responsible for fusion of the tyrosine precursor and the polyketide backbone. The polyketide synthase module (PKS) of ACE1 is responsible for the synthesis of the polyketide backbone and the downstream nonribosomal peptide synthetase (NRPS) amidates the carboxyl end of the polyketide with the tyrosine precursor. Because ACE1 lacks a designated enoylreductase (ER) domain, the required activity is provided the enoyl reductase RAP1. Reduction by the hydrolyase ORFZ, followed by dehydration and intra-molecular Diels-Alder cyclization by the Diels-Alderase ORF3 then yield the required isoindolone-fused macrocycle. A number of oxidative steps catalyzed by the tailoring enzymes identified within the cluster, including cytochrome P450 monooxygenases CYP1 to CYP4, the FAD-linked oxidoreductase OXR2 and the short-chain dehydrogenase/reductase OXR1, are further required to afford the final cytochalasans that confer avirulence and which have still to be identified. The monooxygenase CYP1 has been shown to be a site-selective C-18 hydroxylase whereas the function of CYP3 is the site-selective epoxidation of the C-6/C-7 olefin that is present in some intermediate compounds. Finally, SYN2 and RAP2 are not required for avirulence in Pi33 resistant rice cultivars. The chain is Trans-enoyl reductase RAP2 from Pyricularia oryzae (strain 70-15 / ATCC MYA-4617 / FGSC 8958) (Rice blast fungus).